A 284-amino-acid chain; its full sequence is L-ribulose-5-phosphate 3-epimerase UlaE (284 aa).

This sequence belongs to the L-ribulose-5-phosphate 3-epimerase family.

It carries out the reaction L-ribulose 5-phosphate = L-xylulose 5-phosphate. The protein operates within cofactor degradation; L-ascorbate degradation; D-xylulose 5-phosphate from L-ascorbate: step 3/4. In terms of biological role, catalyzes the isomerization of L-xylulose-5-phosphate to L-ribulose-5-phosphate. Is involved in the anaerobic L-ascorbate utilization. This Escherichia coli O45:K1 (strain S88 / ExPEC) protein is L-ribulose-5-phosphate 3-epimerase UlaE.